A 215-amino-acid polypeptide reads, in one-letter code: Probable cutinase 3 (215 aa).

A signal peptide spans 1–17 (MHFRALLVSALATLAMA). Intrachain disulfides connect cysteine 39–cysteine 118 and cysteine 65–cysteine 79. The Nucleophile role is filled by serine 129. A disulfide bridge connects residues cysteine 180 and cysteine 187. The active site involves aspartate 184. Residue histidine 197 is the Proton donor/acceptor of the active site.

This sequence belongs to the cutinase family.

It localises to the secreted. It catalyses the reaction cutin + H2O = cutin monomers.. Functionally, catalyzes the hydrolysis of complex carboxylic polyesters found in the cell wall of plants. Degrades cutin, a macromolecule that forms the structure of the plant cuticle. The chain is Probable cutinase 3 from Aspergillus clavatus (strain ATCC 1007 / CBS 513.65 / DSM 816 / NCTC 3887 / NRRL 1 / QM 1276 / 107).